The primary structure comprises 196 residues: Transmembrane 4 L6 family member 5 (196 aa).

Over 1-9 (MCTGKCARF) the chain is Cytoplasmic. A helical membrane pass occupies residues 10 to 30 (VGLSLIPLSLVCIVANALLLV). Over 31–45 (PNGQTTWTKDHLSLQ) the chain is Extracellular. The chain crosses the membrane as a helical span at residues 46–66 (VWLMAGFVGGGLMVLCPGISA). The Cytoplasmic segment spans residues 67–89 (VRAGGKGCCGAGCCGNRCRMLRS). Residues 90-110 (VFCSAIGLLGAIYCLSVSGTG) traverse the membrane as a helical segment. The interaction with MTOR and CASTOR1 stretch occupies residues 90 to 196 (VFCSAIGLLG…DCRKKQGSSQ (107 aa)). The Extracellular portion of the chain corresponds to 111–156 (LRIGPQCLMNGSWDYHFQDTAGSYLLNRTQWNLCVEPPDVVLWNVT). N-linked (GlcNAc...) asparagine glycosylation is present at N120. L-arginine is bound at residue 123-128 (WDYHFQ). Residues N137 and N154 are each glycosylated (N-linked (GlcNAc...) asparagine). A helical membrane pass occupies residues 157–177 (LFSLLVAASCLEILLCGVQLV). Residues 178–196 (NASIGVLCGDCRKKQGSSQ) lie on the Cytoplasmic side of the membrane.

The protein belongs to the L6 tetraspanin family. Interacts with MTOR; the interaction is positively regulated by arginine and is negatively regulated by leucine. Interacts with SLC38A9. Interacts with SLC7A1; the interaction is negatively regulated by arginine. Interacts with CASTOR1; the interaction is positively regulated by leucine and is negatively regulated by arginine.

It localises to the lysosome membrane. Its subcellular location is the cell membrane. In terms of biological role, acts as a lysosomal membrane arginine sensor. Forms a complex with MTOR and SLC38A9 on lysosomal membranes in an arginine-regulated manner, leading to arginine efflux which enables the activation of mTORC1 which subsequently leads to RPS6KB1 and EIF4EBP1 phosphorylations. Facilitates cell cycle G1/S phase progression and the translocation of the CDK4-CCND1 complex into the nucleus. CDKN1B and RHOA/ROCK signaling activity are involved in TM4SF5-mediated acceleration of G1/S phase progression. This is Transmembrane 4 L6 family member 5 (TM4SF5) from Bos taurus (Bovine).